The chain runs to 467 residues: Sialic acid-binding Ig-like lectin 12 (467 aa).

An N-terminal signal peptide occupies residues 1 to 18; the sequence is MLLLLLLLLLWGIKGVEG. Over 19–353 the chain is Extracellular; that stretch reads QNPQEVFTLN…ATLSEMMMGT (335 aa). One can recognise an Ig-like V-type domain in the interval 21–141; the sequence is PQEVFTLNVE…TKYNYMWDKM (121 aa). Intrachain disulfides connect cysteine 40-cysteine 176, cysteine 45-cysteine 108, and cysteine 170-cysteine 219. Asparagine 46 carries N-linked (GlcNAc...) asparagine glycosylation. Arginine 126 is an N-acetylneuraminate binding site. 2 Ig-like C2-type domains span residues 152 to 239 and 242 to 339; these read PQIL…LNVS and PKNL…LSLS. 9 N-linked (GlcNAc...) asparagine glycosylation sites follow: asparagine 167, asparagine 197, asparagine 216, asparagine 227, asparagine 237, asparagine 244, asparagine 262, asparagine 287, and asparagine 294. Residues cysteine 278 and cysteine 323 are joined by a disulfide bond. The chain crosses the membrane as a helical span at residues 354 to 374; it reads FVGSGVTALLFLSVCILLLAV. Residues 375-467 are Cytoplasmic-facing; the sequence is RSYRRKPARP…IKFPQRTAWP (93 aa). An ITIM motif motif is present at residues 430–435; that stretch reads IHYATL. Tyrosine 432 and tyrosine 455 each carry phosphotyrosine. The SLAM-like motif signature appears at 453 to 458; it reads TEYSEI.

The protein belongs to the immunoglobulin superfamily. SIGLEC (sialic acid binding Ig-like lectin) family. As to quaternary structure, homodimer; disulfide-linked. Interacts with PTPN6/SHP-1 and PTPN11/SHP-2 upon phosphorylation. Phosphorylation of Tyr-432 is required for binding to PTPN6 and PTPN11. Phosphorylation of Tyr-455 is involved in binding to PTPN6. Tyr-432 needs to be phosphorylated prior to Tyr-455. Expressed by monocytic/myeloid lineage cells. Found at higher levels in spleen, liver and heart. Found at lower levels in kidney and lung.

It is found in the membrane. In terms of biological role, putative adhesion molecule that mediates sialic-acid dependent binding to cells. The sialic acid recognition site may be masked by cis interactions with sialic acids on the same cell surface. In the immune response, may act as an inhibitory receptor upon ligand induced tyrosine phosphorylation by recruiting cytoplasmic phosphatase(s) via their SH2 domain(s) that block signal transduction through dephosphorylation of signaling molecules. This is Sialic acid-binding Ig-like lectin 12 (Siglec12) from Mus musculus (Mouse).